Consider the following 140-residue polypeptide: Sex-regulated protein janus-B (140 aa).

Residue Arg42 coordinates substrate. His69 (proton acceptor) is an active-site residue. 110 to 112 (SRT) serves as a coordination point for substrate.

Belongs to the janus family.

Its function is as follows. JanA and janB regulate somatic sex differentiation. In Drosophila teissieri (Fruit fly), this protein is Sex-regulated protein janus-B (janB).